Consider the following 151-residue polypeptide: Small ribosomal subunit protein uS15 (151 aa).

Belongs to the universal ribosomal protein uS15 family.

In Zea mays (Maize), this protein is Small ribosomal subunit protein uS15 (RPS13).